The chain runs to 92 residues: RNA-binding protein Hfq (92 aa).

One can recognise a Sm domain in the interval 9–68 (DPFLNALRRERVPVSIYLVNGIKLQGQVESFDQFVILLKNTVSQMVYKHAISTVVPARPF). The tract at residues 68 to 92 (FNVSSHHNTPNQAAGYNASHDDSAE) is disordered. Residues 69-81 (NVSSHHNTPNQAA) show a composition bias toward polar residues.

The protein belongs to the Hfq family. Homohexamer.

Its function is as follows. RNA chaperone that binds small regulatory RNA (sRNAs) and mRNAs to facilitate mRNA translational regulation in response to envelope stress, environmental stress and changes in metabolite concentrations. Also binds with high specificity to tRNAs. In Shewanella loihica (strain ATCC BAA-1088 / PV-4), this protein is RNA-binding protein Hfq.